We begin with the raw amino-acid sequence, 109 residues long: Phosphoribosyl-ATP pyrophosphatase (109 aa).

It belongs to the PRA-PH family.

The protein resides in the cytoplasm. It catalyses the reaction 1-(5-phospho-beta-D-ribosyl)-ATP + H2O = 1-(5-phospho-beta-D-ribosyl)-5'-AMP + diphosphate + H(+). The protein operates within amino-acid biosynthesis; L-histidine biosynthesis; L-histidine from 5-phospho-alpha-D-ribose 1-diphosphate: step 2/9. This Paramagnetospirillum magneticum (strain ATCC 700264 / AMB-1) (Magnetospirillum magneticum) protein is Phosphoribosyl-ATP pyrophosphatase.